The primary structure comprises 225 residues: NAD(P)H-quinone oxidoreductase subunit K, chloroplastic (225 aa).

[4Fe-4S] cluster is bound by residues cysteine 43, cysteine 44, cysteine 108, and cysteine 139.

The protein belongs to the complex I 20 kDa subunit family. In terms of assembly, NDH is composed of at least 16 different subunits, 5 of which are encoded in the nucleus. It depends on [4Fe-4S] cluster as a cofactor.

Its subcellular location is the plastid. The protein localises to the chloroplast thylakoid membrane. The enzyme catalyses a plastoquinone + NADH + (n+1) H(+)(in) = a plastoquinol + NAD(+) + n H(+)(out). The catalysed reaction is a plastoquinone + NADPH + (n+1) H(+)(in) = a plastoquinol + NADP(+) + n H(+)(out). In terms of biological role, NDH shuttles electrons from NAD(P)H:plastoquinone, via FMN and iron-sulfur (Fe-S) centers, to quinones in the photosynthetic chain and possibly in a chloroplast respiratory chain. The immediate electron acceptor for the enzyme in this species is believed to be plastoquinone. Couples the redox reaction to proton translocation, and thus conserves the redox energy in a proton gradient. This chain is NAD(P)H-quinone oxidoreductase subunit K, chloroplastic, found in Lobularia maritima (Sweet alyssum).